Here is an 85-residue protein sequence, read N- to C-terminus: Translation initiation factor IF-1 1 (85 aa).

The S1-like domain occupies 1 to 72 (MSKEDLIEMQ…NKGRLTFRHI (72 aa)).

Belongs to the IF-1 family. Component of the 30S ribosomal translation pre-initiation complex which assembles on the 30S ribosome in the order IF-2 and IF-3, IF-1 and N-formylmethionyl-tRNA(fMet); mRNA recruitment can occur at any time during PIC assembly.

It is found in the cytoplasm. In terms of biological role, one of the essential components for the initiation of protein synthesis. Stabilizes the binding of IF-2 and IF-3 on the 30S subunit to which N-formylmethionyl-tRNA(fMet) subsequently binds. Helps modulate mRNA selection, yielding the 30S pre-initiation complex (PIC). Upon addition of the 50S ribosomal subunit IF-1, IF-2 and IF-3 are released leaving the mature 70S translation initiation complex. This Paracidovorax citrulli (strain AAC00-1) (Acidovorax citrulli) protein is Translation initiation factor IF-1 1.